The primary structure comprises 355 residues: Protein RecA (355 aa).

67 to 74 (GPESSGKT) is a binding site for ATP.

It belongs to the RecA family.

The protein resides in the cytoplasm. Its function is as follows. Can catalyze the hydrolysis of ATP in the presence of single-stranded DNA, the ATP-dependent uptake of single-stranded DNA by duplex DNA, and the ATP-dependent hybridization of homologous single-stranded DNAs. It interacts with LexA causing its activation and leading to its autocatalytic cleavage. This is Protein RecA from Proteus mirabilis (strain HI4320).